The sequence spans 160 residues: Cytochrome b6-f complex subunit 4 (160 aa).

Transmembrane regions (helical) follow at residues leucine 36–valine 56, leucine 95–glutamate 115, and isoleucine 128–cysteine 148.

Belongs to the cytochrome b family. PetD subfamily. As to quaternary structure, the 4 large subunits of the cytochrome b6-f complex are cytochrome b6, subunit IV (17 kDa polypeptide, PetD), cytochrome f and the Rieske protein, while the 4 small subunits are PetG, PetL, PetM and PetN. The complex functions as a dimer.

It is found in the cellular thylakoid membrane. Functionally, component of the cytochrome b6-f complex, which mediates electron transfer between photosystem II (PSII) and photosystem I (PSI), cyclic electron flow around PSI, and state transitions. The sequence is that of Cytochrome b6-f complex subunit 4 from Prochlorococcus marinus (strain MIT 9301).